Consider the following 257-residue polypeptide: Neuroendocrine secretory protein 55 (257 aa).

Positions 1–46 are cleaved as a signal peptide; sequence MDRRSRAQQWRRARHNYNDLCPPIGRRAATALLWLSCSIALLRALA. The segment at 61 to 257 is disordered; that stretch reads SFLNAHHRSA…RKGPIPIRRH (197 aa). Over residues 70 to 82 the composition is skewed to low complexity; sequence AAAAAAAQVLPES. Residues 86 to 103 are compositionally biased toward basic and acidic residues; the sequence is ESDHEHEEVEPELARPEC. Over residues 104 to 139 the composition is skewed to acidic residues; sequence LEYDQDDYETETDSETEPESDIESETEIETEPETEP. Basic and acidic residues predominate over residues 200-211; sequence EPQRGPLDQDPR. The span at 227-237 shows a compositional bias: basic residues; sequence PRRCKTRRPAR.

This sequence belongs to the NESP55 family. Post-translationally, binds keratan sulfate chains. May be proteolytically processed to give rise to a number of active peptides.

The protein localises to the cytoplasmic vesicle. Its subcellular location is the secretory vesicle. It is found in the secreted. This is Neuroendocrine secretory protein 55 from Mus musculus (Mouse).